A 141-amino-acid chain; its full sequence is Large ribosomal subunit protein uL11 (141 aa).

This sequence belongs to the universal ribosomal protein uL11 family. Part of the ribosomal stalk of the 50S ribosomal subunit. Interacts with L10 and the large rRNA to form the base of the stalk. L10 forms an elongated spine to which L12 dimers bind in a sequential fashion forming a multimeric L10(L12)X complex. One or more lysine residues are methylated.

In terms of biological role, forms part of the ribosomal stalk which helps the ribosome interact with GTP-bound translation factors. This chain is Large ribosomal subunit protein uL11, found in Amoebophilus asiaticus (strain 5a2).